A 916-amino-acid chain; its full sequence is Protein translocase subunit SecA (916 aa).

ATP contacts are provided by residues Gln87, 105 to 109 (GEGKT), and Asp507. Positions 900, 902, 911, and 912 each coordinate Zn(2+).

The protein belongs to the SecA family. As to quaternary structure, monomer and homodimer. Part of the essential Sec protein translocation apparatus which comprises SecA, SecYEG and auxiliary proteins SecDF-YajC and YidC. It depends on Zn(2+) as a cofactor.

Its subcellular location is the cell inner membrane. The protein localises to the cytoplasm. The catalysed reaction is ATP + H2O + cellular proteinSide 1 = ADP + phosphate + cellular proteinSide 2.. Its function is as follows. Part of the Sec protein translocase complex. Interacts with the SecYEG preprotein conducting channel. Has a central role in coupling the hydrolysis of ATP to the transfer of proteins into and across the cell membrane, serving both as a receptor for the preprotein-SecB complex and as an ATP-driven molecular motor driving the stepwise translocation of polypeptide chains across the membrane. The sequence is that of Protein translocase subunit SecA from Neisseria meningitidis serogroup A / serotype 4A (strain DSM 15465 / Z2491).